We begin with the raw amino-acid sequence, 2527 residues long: Highly reducing polyketide synthase poxF (2527 aa).

The 426-residue stretch at 20–445 (VMPIAIIGMA…GANAHVIVES (426 aa)) folds into the Ketosynthase family 3 (KS3) domain. Residues Cys193, His328, and His368 each act as for beta-ketoacyl synthase activity in the active site. A malonyl-CoA:ACP transacylase (MAT) domain region spans residues 560-882 (VFTGQGAQWF…TYASCLSRGQ (323 aa)). The interval 951–1086 (HDLLGVPAAG…GLCCTPSPAQ (136 aa)) is N-terminal hotdog fold. Residues 951 to 1243 (HDLLGVPAAG…SVRVINNAGT (293 aa)) are dehydratase (DH) domain. Residues 951 to 1270 (HDLLGVPAAG…CQSLGSSAVV (320 aa)) enclose the PKS/mFAS DH domain. His983 serves as the catalytic Proton acceptor; for dehydratase activity. Positions 1108 to 1270 (AWRILNPADT…CQSLGSSAVV (163 aa)) are C-terminal hotdog fold. The active-site Proton donor; for dehydratase activity is the Asp1174. Residues 1406–1587 (EDQAEWSSVS…RLLAKAGFEP (182 aa)) form a methyltransferase (CMet) domain region. The enoyl reductase (ER) (ER) domain stretch occupies residues 1823-2137 (GLLNSLVFTE…TGKHMGKIVL (315 aa)). The segment at 2162-2339 (TYLLVGGVGG…AVSIDLGMVS (178 aa)) is ketoreductase (KR) domain. One can recognise a Carrier domain in the interval 2445 to 2522 (EVTTLIQSAL…GLAGQMAKKS (78 aa)). Ser2482 is modified (O-(pantetheine 4'-phosphoryl)serine).

It functions in the pathway secondary metabolite biosynthesis. Functionally, highly reducing polyketide synthase; part of the gene cluster that mediates the biosynthesis of oxaleimides, cytotoxic compounds containing an unusual disubstituted succinimide moiety. The first step of the pathway is provided by the HR-PKS poxF that serves in a new mode of collaborative biosynthesis with the PKS-NRPS poxE, by providing the olefin containing amino acid substrate via the synthesis of an ACP-bound dec-4-enoate. The cytochrome P450 monooxygenase poxM-catalyzed oxidation at the alpha-position creates the enzyme-bound 2-hydroxydec-4-enoyl-ACP thioester, which may be prone to spontaneous hydrolysis to yield 2-hydroxydec-4-enoic acid due to increased electrophilicity of the carbonyl. 2-hydroxydec-4-enoic acid can then be further oxidized by poxM to yield the alpha-ketoacid 2-oxodec-4-enoicacid, which is reductively aminated by the aminotransferase poxL to yield (S,E)-2-aminodec-4-enoic acid. The Hybrid PKS-NRPS synthetase poxE then performs condensation between the octaketide product of its PKS modules and the amino group of (S,E)-2-aminodec-4-enoic acid which is activated and incorporated by the adenylation domain. The resulting aminoacyl product can be cyclized by the Diels-Alderase PoxQ and reductively released by the reductive (R) domain of poxE to yield an aldehyde intermediate. The released aldehyde is then substrate for a Knoevenagel condensation by the hydrolyase poxO followed by an oxidation at the 5-position of the pyrrolidone ring. The presence of the olefin from the amino acid building block allows for migration of the substituted allyl group to occur. This allylic transposition reaction takes place in a conjugate addition, semipinacol-like fashion to yield a succinimide intermediate. Iterative two-electron oxidations of the C7 methyl of the succinimide intermediate to the carboxylic acid can be catalyzed by one of two remaining cytochrome P450 monooxygenasess poxC or poxD to yield oxaleimide A. Subsequent oxidation yields the maleimide scaffold oxaleimide I. Both oxaleimide A and oxaleimide I can undergo oxidative modifications in the decalin ring to yield the series of products oxaleimides B to H. This is Highly reducing polyketide synthase poxF from Penicillium oxalicum.